An 885-amino-acid polypeptide reads, in one-letter code: Exosome complex component 10 (885 aa).

A Glycyl lysine isopeptide (Lys-Gly) (interchain with G-Cter in SUMO2) cross-link involves residue K19. Residues 289–455 form the 3'-5' exonuclease domain; that stretch reads HFISSLDELV…YIYDKMRLEM (167 aa). Residues D313, E315, D371, and D440 each contribute to the Mg(2+) site. In terms of domain architecture, HRDC spans 503–583; sequence NTQQLTAFQL…QQAREMPLLK (81 aa). K583 is covalently cross-linked (Glycyl lysine isopeptide (Lys-Gly) (interchain with G-Cter in SUMO1); alternate). K583 participates in a covalent cross-link: Glycyl lysine isopeptide (Lys-Gly) (interchain with G-Cter in SUMO2); alternate. K710 participates in a covalent cross-link: Glycyl lysine isopeptide (Lys-Gly) (interchain with G-Cter in SUMO2). 2 stretches are compositionally biased toward basic and acidic residues: residues 776–794 and 804–816; these read AAKK…EQKQ and KPKD…KEFT. Positions 776-885 are disordered; it reads AAKKRERATS…RGFRYNWPQR (110 aa). The residue at position 821 (S821) is a Phosphoserine. Glycyl lysine isopeptide (Lys-Gly) (interchain with G-Cter in SUMO2) cross-links involve residues K826, K833, and K859. Over residues 831-848 the composition is skewed to polar residues; that stretch reads NSKSKVSSQFDPNKQTPS. Over residues 861–871 the composition is skewed to polar residues; sequence SVGNKSMSFPT. K873 is covalently cross-linked (Glycyl lysine isopeptide (Lys-Gly) (interchain with G-Cter in SUMO2)).

The protein belongs to the exosome component 10/RRP6 family. Component of the RNA exosome complex. The catalytically inactive RNA exosome core complex (Exo-9) associates with the catalytic subunit EXOSC10/RRP6 (via its N-terminus). Exo-9 may associate with DIS3 to form the nucleolar exosome complex, or DIS3L to form the cytoplasmic exosome complex. The RNA exosome complex interacts with cofactors C1D/RRP47, MPHOSPH6/MPP6 and MTREX/MTR4. Interacts with MTREX; the interaction with MTREX mediates the association of MTREX with nuclear RNA exosomes. Part of the small subunit (SSU) processome, composed of more than 70 proteins and the RNA chaperone small nucleolar RNA (snoRNA) U3. Interacts with ALYREF/THOC4. Interacts with DHX36; this interaction occurs in a RNase-insensitive manner. Interacts with NRDE2. Interacts (via C-terminus) with USP36 (via C-terminus); the interaction is facilitated by the association with RNA and promotes sumoylation of EXOSC10. The cofactor is Mg(2+). Post-translationally, sumoylated by USP36; sumoylation does not significantly affect EXOSC10 nucleolar localization and association with core exosome and USP36, but regulates the nucleolar RNA exosome activity in rRNA processing by promoting binding of EXOSC10 to pre-rRNAs. Effects of sumoylation on EXOSC10 levels vary between different studies. Sumoylation of EXOSC10 is required for the modulation of EXOSC10 effects on cellular protein translation and cell proliferation. Sumoylation is promoted by mild hypothermia.

The protein localises to the cytoplasm. It is found in the nucleus. The protein resides in the nucleolus. Its subcellular location is the nucleoplasm. With respect to regulation, arginine-rich dipeptide repeat proteins expressed from C9orf72-derived repeat RNA interact with EXOSC10 and inhibit its ability to promote degradation of this RNA. Its function is as follows. Catalytic component of the RNA exosome complex which has 3'-&gt;5' exoribonuclease activity and participates in a multitude of cellular RNA processing and degradation events. In the nucleus, the RNA exosome complex is involved in proper maturation of stable RNA species such as rRNA, snRNA and snoRNA, in the elimination of RNA processing by-products and non-coding 'pervasive' transcripts, such as antisense RNA species and promoter-upstream transcripts (PROMPTs), and of mRNAs with processing defects, thereby limiting or excluding their export to the cytoplasm. Part of the small subunit (SSU) processome, first precursor of the small eukaryotic ribosomal subunit. During the assembly of the SSU processome in the nucleolus, many ribosome biogenesis factors, an RNA chaperone and ribosomal proteins associate with the nascent pre-rRNA and work in concert to generate RNA folding, modifications, rearrangements and cleavage as well as targeted degradation of pre-ribosomal RNA by the RNA exosome. The RNA exosome may be involved in Ig class switch recombination (CSR) and/or Ig variable region somatic hypermutation (SHM) by targeting AICDA deamination activity to transcribed dsDNA substrates. In the cytoplasm, the RNA exosome complex is involved in general mRNA turnover and specifically degrades inherently unstable mRNAs containing AU-rich elements (AREs) within their 3' untranslated regions, and in RNA surveillance pathways, preventing translation of aberrant mRNAs. It seems to be involved in degradation of histone mRNA. EXOSC10 is required for nucleolar localization of C1D and probably mediates the association of MTREX, C1D and MPHOSPH6 with the RNA exosome involved in the maturation of 5.8S rRNA. Plays a role in the recruitment of replication protein A complex (RPA) and RAD51 to DNA double-strand breaks caused by irradiation, contributing to DNA repair by homologous recombination. Regulates levels of damage-induced RNAs in order to prevent DNA-RNA hybrid formation at DNA double-strand breaks and limit DNA end resection after damage. Plays a role in oocyte development, maturation and survival. Required for normal testis development and mitotic division of spermatogonia. Plays a role in proper embryo development. Required for global protein translation. Required for cell proliferation. Regulates metabolism of C9orf72-derived repeat RNA that can be translated into toxic dipeptide repeat proteins. The polypeptide is Exosome complex component 10 (Homo sapiens (Human)).